We begin with the raw amino-acid sequence, 211 residues long: Redox-sensing transcriptional repressor Rex (211 aa).

Residues 17-56 constitute a DNA-binding region (H-T-H motif); sequence LYYRFVSILKGKGIDRVNSKTISEALQIDSATIRRDFSYF. Residue 91-96 participates in NAD(+) binding; sequence GIGNLG.

It belongs to the transcriptional regulatory Rex family. As to quaternary structure, homodimer.

It localises to the cytoplasm. Functionally, modulates transcription in response to changes in cellular NADH/NAD(+) redox state. The protein is Redox-sensing transcriptional repressor Rex of Staphylococcus epidermidis (strain ATCC 35984 / DSM 28319 / BCRC 17069 / CCUG 31568 / BM 3577 / RP62A).